The primary structure comprises 346 residues: Biotin synthase (346 aa).

The Radical SAM core domain occupies 38–256 (RQVQVSTLLS…IAIARIMMPT (219 aa)). [4Fe-4S] cluster contacts are provided by Cys-53, Cys-57, and Cys-60. [2Fe-2S] cluster contacts are provided by Cys-97, Cys-128, Cys-188, and Arg-260.

This sequence belongs to the radical SAM superfamily. Biotin synthase family. In terms of assembly, homodimer. [4Fe-4S] cluster serves as cofactor. The cofactor is [2Fe-2S] cluster.

It carries out the reaction (4R,5S)-dethiobiotin + (sulfur carrier)-SH + 2 reduced [2Fe-2S]-[ferredoxin] + 2 S-adenosyl-L-methionine = (sulfur carrier)-H + biotin + 2 5'-deoxyadenosine + 2 L-methionine + 2 oxidized [2Fe-2S]-[ferredoxin]. The protein operates within cofactor biosynthesis; biotin biosynthesis; biotin from 7,8-diaminononanoate: step 2/2. Its function is as follows. Catalyzes the conversion of dethiobiotin (DTB) to biotin by the insertion of a sulfur atom into dethiobiotin via a radical-based mechanism. This is Biotin synthase from Klebsiella pneumoniae (strain 342).